Reading from the N-terminus, the 20-residue chain is Agglutinin beta-3 chain (20 aa).

This sequence belongs to the jacalin lectin family. As to quaternary structure, tetramer of four alpha chains associated with two or four beta chains.

In terms of biological role, D-galactose-specific lectin, binds the T-antigen structure Gal-beta1,3-GalNAc (Thomsen-Friedenreich-antigen-specific lectin). Potent and selective stimulant of distinct T- and B-cell functions. Shows a unique ability to specifically recognize IgA-1 from human serum. In Artocarpus integer (Jack fruit), this protein is Agglutinin beta-3 chain.